A 641-amino-acid polypeptide reads, in one-letter code: Phosphomethylpyrimidine synthase (641 aa).

Substrate-binding positions include N221, M250, Y279, H315, 335-337 (SRG), 376-379 (DGLR), and E415. H419 serves as a coordination point for Zn(2+). Y442 contributes to the substrate binding site. Position 483 (H483) interacts with Zn(2+). Positions 563, 566, and 571 each coordinate [4Fe-4S] cluster.

Belongs to the ThiC family. Homodimer. The cofactor is [4Fe-4S] cluster.

It carries out the reaction 5-amino-1-(5-phospho-beta-D-ribosyl)imidazole + S-adenosyl-L-methionine = 4-amino-2-methyl-5-(phosphooxymethyl)pyrimidine + CO + 5'-deoxyadenosine + formate + L-methionine + 3 H(+). It participates in cofactor biosynthesis; thiamine diphosphate biosynthesis. Its function is as follows. Catalyzes the synthesis of the hydroxymethylpyrimidine phosphate (HMP-P) moiety of thiamine from aminoimidazole ribotide (AIR) in a radical S-adenosyl-L-methionine (SAM)-dependent reaction. The polypeptide is Phosphomethylpyrimidine synthase (Rhodopseudomonas palustris (strain TIE-1)).